A 455-amino-acid chain; its full sequence is GTPase Der (455 aa).

2 EngA-type G domains span residues 4–169 (PVVA…PPKD) and 178–353 (IQMS…EQHR). GTP is bound by residues 10–17 (GRPNVGKS), 57–61 (DTGGL), 120–123 (NKCE), 184–191 (GRPNVGKS), 231–235 (DTAGI), and 296–299 (NKWD). Residues 354 to 439 (RRVTTSVVNE…PLKLFWRGKQ (86 aa)) enclose the KH-like domain.

Belongs to the TRAFAC class TrmE-Era-EngA-EngB-Septin-like GTPase superfamily. EngA (Der) GTPase family. Associates with the 50S ribosomal subunit.

GTPase that plays an essential role in the late steps of ribosome biogenesis. This is GTPase Der from Synechococcus sp. (strain CC9902).